A 91-amino-acid chain; its full sequence is MTDEPKTRVSVRIYGQDYTIVGTESPAHIRLVAAFVDDKMHEFSERNPVLDVPKLAVLTAVNIANEYLKLKEEYDRLAAKLRREKGGEDDD.

The stretch at 59–86 (TAVNIANEYLKLKEEYDRLAAKLRREKG) forms a coiled coil.

The protein belongs to the ZapA family. Type 2 subfamily. As to quaternary structure, homodimer. Interacts with FtsZ.

The protein localises to the cytoplasm. Its function is as follows. Activator of cell division through the inhibition of FtsZ GTPase activity, therefore promoting FtsZ assembly into bundles of protofilaments necessary for the formation of the division Z ring. It is recruited early at mid-cell but it is not essential for cell division. This Geobacillus thermodenitrificans (strain NG80-2) protein is Cell division protein ZapA.